Consider the following 477-residue polypeptide: Glycogen synthase (477 aa).

Lysine 15 serves as a coordination point for ADP-alpha-D-glucose.

This sequence belongs to the glycosyltransferase 1 family. Bacterial/plant glycogen synthase subfamily.

The catalysed reaction is [(1-&gt;4)-alpha-D-glucosyl](n) + ADP-alpha-D-glucose = [(1-&gt;4)-alpha-D-glucosyl](n+1) + ADP + H(+). The protein operates within glycan biosynthesis; glycogen biosynthesis. Functionally, synthesizes alpha-1,4-glucan chains using ADP-glucose. The polypeptide is Glycogen synthase (Edwardsiella ictaluri (strain 93-146)).